A 1187-amino-acid chain; its full sequence is ATP-dependent DNA helicase MPH1 (1187 aa).

The Helicase ATP-binding domain occupies 144–311 (IVERAFYDNL…QIIDNLNISK (168 aa)). An ATP-binding site is contributed by 157 to 164 (LPTGLGKT). Positions 259–262 (DEAH) match the DEAH box motif. The Helicase C-terminal domain occupies 486 to 681 (ELDDFFKNHE…FIQLRPQHRM (196 aa)). Disordered regions lie at residues 542-576 (VENFGKKKQKGQTKKKKDERPSTRSSSENAQMTGM), 781-848 (DKLV…NNQV), and 941-1003 (PEKP…LGVK). The span at 547–556 (KKKQKGQTKK) shows a compositional bias: basic residues. The segment covering 564-576 (TRSSSENAQMTGM) has biased composition (polar residues). Residues 781-817 (DKLVDSDSESEVDKENENVIQEVDKSKNQEQNDHIIT) are compositionally biased toward basic and acidic residues. Polar residues predominate over residues 822 to 848 (TEQSVAGNTKSTTNGTSYSEPENNNQV). The span at 967–977 (SNSISIPSSTT) shows a compositional bias: low complexity. Over residues 980–989 (SHNEVTRKVV) the composition is skewed to basic and acidic residues.

The protein belongs to the DEAD box helicase family. DEAH subfamily. FANCM sub-subfamily. As to quaternary structure, interacts with the MHF histone-fold complex to form the FANCM-MHF complex.

It localises to the nucleus. It catalyses the reaction ATP + H2O = ADP + phosphate + H(+). In terms of biological role, ATP-dependent DNA helicase involved in DNA damage repair by homologous recombination and in genome maintenance. Capable of unwinding D-loops. Plays a role in limiting crossover recombinants during mitotic DNA double-strand break (DSB) repair. Component of a FANCM-MHF complex which promotes gene conversion at blocked replication forks, probably by reversal of the stalled fork. The sequence is that of ATP-dependent DNA helicase MPH1 from Candida albicans (strain SC5314 / ATCC MYA-2876) (Yeast).